The chain runs to 121 residues: Cytochrome c2 iso-2 (121 aa).

4 residues coordinate heme c: Cys-15, Cys-18, His-19, and Met-98.

It belongs to the cytochrome c family. In terms of processing, binds 1 heme c group covalently per subunit.

Its function is as follows. Cytochrome c2 is found mainly in purple, non-sulfur, photosynthetic bacteria where it functions as the electron donor to the oxidized bacteriochlorophyll in the photophosphorylation pathway. However, it may also have a role in the respiratory chain and is found in some non-photosynthetic bacteria. This is Cytochrome c2 iso-2 from Rhodospirillum centenum (Rhodocista centenaria).